The following is a 201-amino-acid chain: Retinol-binding protein 4 (201 aa).

Positions 1–18 (MEWVWALVLLAALGSGRG) are cleaved as a signal peptide. 3 cysteine pairs are disulfide-bonded: Cys-22–Cys-178, Cys-88–Cys-192, and Cys-138–Cys-147. Gln-116 is a substrate binding site. Arg-139 carries the post-translational modification Omega-N-methylarginine.

This sequence belongs to the calycin superfamily. Lipocalin family. In terms of assembly, interacts with TTR. Interaction with TTR prevents its loss by filtration through the kidney glomeruli. Interacts with STRA6.

The protein resides in the secreted. Functionally, retinol-binding protein that mediates retinol transport in blood plasma. Delivers retinol from the liver stores to the peripheral tissues. Transfers the bound all-trans retinol to STRA6, that then facilitates retinol transport across the cell membrane. This Oryctolagus cuniculus (Rabbit) protein is Retinol-binding protein 4 (RBP4).